The primary structure comprises 413 residues: Na(+)-translocating NADH-quinone reductase subunit B (413 aa).

Transmembrane regions (helical) follow at residues 56–76 (MMIL…YNVG), 123–143 (LLGA…GGFW), and 169–189 (IVPP…GVVI). T236 is modified (FMN phosphoryl threonine). Helical transmembrane passes span 270 to 290 (GSIG…IIFG), 297 to 317 (IVAG…WIGS), 322 to 342 (LFAM…GMIF), 358 to 378 (WWYG…NPAY), and 381 to 401 (GMML…YVVV).

It belongs to the NqrB/RnfD family. In terms of assembly, composed of six subunits; NqrA, NqrB, NqrC, NqrD, NqrE and NqrF. The cofactor is FMN.

It is found in the cell inner membrane. The enzyme catalyses a ubiquinone + n Na(+)(in) + NADH + H(+) = a ubiquinol + n Na(+)(out) + NAD(+). Functionally, NQR complex catalyzes the reduction of ubiquinone-1 to ubiquinol by two successive reactions, coupled with the transport of Na(+) ions from the cytoplasm to the periplasm. NqrA to NqrE are probably involved in the second step, the conversion of ubisemiquinone to ubiquinol. The protein is Na(+)-translocating NADH-quinone reductase subunit B of Yersinia pestis.